Here is a 390-residue protein sequence, read N- to C-terminus: O-glycoside alpha-1,2-mannosyltransferase omh1 (390 aa).

Residue Glu279 is the Nucleophile of the active site.

It belongs to the glycosyltransferase 15 family.

It localises to the endoplasmic reticulum. Its subcellular location is the golgi apparatus. Functionally, mannosyltransferase involved in O-glycosylation of cell wall and secreted proteins. Plays a major role in extending alpha-1,2-linked mannose in the O-glycan pathway. The protein is O-glycoside alpha-1,2-mannosyltransferase omh1 (omh1) of Schizosaccharomyces pombe (strain 972 / ATCC 24843) (Fission yeast).